The sequence spans 288 residues: UTP--glucose-1-phosphate uridylyltransferase (288 aa).

This sequence belongs to the UDPGP type 2 family.

The enzyme catalyses alpha-D-glucose 1-phosphate + UTP + H(+) = UDP-alpha-D-glucose + diphosphate. The protein operates within glycolipid metabolism; diglucosyl-diacylglycerol biosynthesis. In terms of biological role, catalyzes the formation of UDP-glucose from glucose-1-phosphate and UTP. This is an intermediate step in the biosynthesis of diglucosyl-diacylglycerol (Glc2-DAG), i.e. the predominant glycolipid found in the S.aureus membrane, which is also used as a membrane anchor for lipoteichoic acid (LTA). In Staphylococcus aureus (strain bovine RF122 / ET3-1), this protein is UTP--glucose-1-phosphate uridylyltransferase (gtaB).